We begin with the raw amino-acid sequence, 459 residues long: Cysteine--tRNA ligase (459 aa).

Cys-28 contributes to the Zn(2+) binding site. The short motif at 30-40 (VTIYDLCHIGH) is the 'HIGH' region element. Cys-209, His-234, and Glu-238 together coordinate Zn(2+). The short motif at 266–270 (KMSKS) is the 'KMSKS' region element. An ATP-binding site is contributed by Lys-269.

This sequence belongs to the class-I aminoacyl-tRNA synthetase family. In terms of assembly, monomer. Zn(2+) is required as a cofactor.

Its subcellular location is the cytoplasm. The enzyme catalyses tRNA(Cys) + L-cysteine + ATP = L-cysteinyl-tRNA(Cys) + AMP + diphosphate. The chain is Cysteine--tRNA ligase from Shewanella piezotolerans (strain WP3 / JCM 13877).